Here is a 188-residue protein sequence, read N- to C-terminus: Elongation factor P (188 aa).

It belongs to the elongation factor P family.

The protein localises to the cytoplasm. Its pathway is protein biosynthesis; polypeptide chain elongation. In terms of biological role, involved in peptide bond synthesis. Stimulates efficient translation and peptide-bond synthesis on native or reconstituted 70S ribosomes in vitro. Probably functions indirectly by altering the affinity of the ribosome for aminoacyl-tRNA, thus increasing their reactivity as acceptors for peptidyl transferase. The sequence is that of Elongation factor P from Gluconobacter oxydans (strain 621H) (Gluconobacter suboxydans).